The primary structure comprises 258 residues: Indole-3-glycerol phosphate synthase (258 aa).

Belongs to the TrpC family.

It catalyses the reaction 1-(2-carboxyphenylamino)-1-deoxy-D-ribulose 5-phosphate + H(+) = (1S,2R)-1-C-(indol-3-yl)glycerol 3-phosphate + CO2 + H2O. It participates in amino-acid biosynthesis; L-tryptophan biosynthesis; L-tryptophan from chorismate: step 4/5. This chain is Indole-3-glycerol phosphate synthase, found in Chlorobium phaeovibrioides (strain DSM 265 / 1930) (Prosthecochloris vibrioformis (strain DSM 265)).